We begin with the raw amino-acid sequence, 175 residues long: Alkyl hydroperoxide reductase AhpD (175 aa).

Catalysis depends on C131, which acts as the Proton donor. C131 and C134 are disulfide-bonded. Residue C134 is the Cysteine sulfenic acid (-SOH) intermediate of the active site.

Belongs to the AhpD family.

It catalyses the reaction N(6)-[(R)-dihydrolipoyl]-L-lysyl-[lipoyl-carrier protein] + a hydroperoxide = N(6)-[(R)-lipoyl]-L-lysyl-[lipoyl-carrier protein] + an alcohol + H2O. Antioxidant protein with alkyl hydroperoxidase activity. Required for the reduction of the AhpC active site cysteine residues and for the regeneration of the AhpC enzyme activity. The protein is Alkyl hydroperoxide reductase AhpD of Brucella anthropi (strain ATCC 49188 / DSM 6882 / CCUG 24695 / JCM 21032 / LMG 3331 / NBRC 15819 / NCTC 12168 / Alc 37) (Ochrobactrum anthropi).